The sequence spans 817 residues: Leucine--tRNA ligase (817 aa).

The 'HIGH' region signature appears at 42–52 (PYPSGKLHMGH). A 'KMSKS' region motif is present at residues 576 to 580 (KMSKS). Lysine 579 contributes to the ATP binding site.

It belongs to the class-I aminoacyl-tRNA synthetase family.

The protein resides in the cytoplasm. It carries out the reaction tRNA(Leu) + L-leucine + ATP = L-leucyl-tRNA(Leu) + AMP + diphosphate. The chain is Leucine--tRNA ligase from Methylobacillus flagellatus (strain ATCC 51484 / DSM 6875 / VKM B-1610 / KT).